Here is a 53-residue protein sequence, read N- to C-terminus: MPQMAPINWLILFFIFSITLVIFNILNYFCFSYTPMKTSQSLNIKFNKLNWKW.

The helical transmembrane segment at 9–29 (WLILFFIFSITLVIFNILNYF) threads the bilayer.

The protein belongs to the ATPase protein 8 family. In terms of assembly, F-type ATPases have 2 components, CF(1) - the catalytic core - and CF(0) - the membrane proton channel.

The protein resides in the mitochondrion membrane. Its function is as follows. Mitochondrial membrane ATP synthase (F(1)F(0) ATP synthase or Complex V) produces ATP from ADP in the presence of a proton gradient across the membrane which is generated by electron transport complexes of the respiratory chain. F-type ATPases consist of two structural domains, F(1) - containing the extramembraneous catalytic core and F(0) - containing the membrane proton channel, linked together by a central stalk and a peripheral stalk. During catalysis, ATP synthesis in the catalytic domain of F(1) is coupled via a rotary mechanism of the central stalk subunits to proton translocation. Part of the complex F(0) domain. Minor subunit located with subunit a in the membrane. The polypeptide is ATP synthase protein 8 (mt:ATPase8) (Anopheles quadrimaculatus (Common malaria mosquito)).